The chain runs to 80 residues: Acyl carrier protein (80 aa).

A Carrier domain is found at 4-79 (EEIFNKIKDL…DAVSYIKSHQ (76 aa)). Residue Ser-39 is modified to O-(pantetheine 4'-phosphoryl)serine.

It belongs to the acyl carrier protein (ACP) family. In terms of processing, 4'-phosphopantetheine is transferred from CoA to a specific serine of apo-ACP by AcpS. This modification is essential for activity because fatty acids are bound in thioester linkage to the sulfhydryl of the prosthetic group.

It is found in the cytoplasm. The protein operates within lipid metabolism; fatty acid biosynthesis. Functionally, carrier of the growing fatty acid chain in fatty acid biosynthesis. In Lactobacillus acidophilus (strain ATCC 700396 / NCK56 / N2 / NCFM), this protein is Acyl carrier protein.